The sequence spans 199 residues: Imidazoleglycerol-phosphate dehydratase (199 aa).

It belongs to the imidazoleglycerol-phosphate dehydratase family.

It is found in the cytoplasm. The catalysed reaction is D-erythro-1-(imidazol-4-yl)glycerol 3-phosphate = 3-(imidazol-4-yl)-2-oxopropyl phosphate + H2O. Its pathway is amino-acid biosynthesis; L-histidine biosynthesis; L-histidine from 5-phospho-alpha-D-ribose 1-diphosphate: step 6/9. The sequence is that of Imidazoleglycerol-phosphate dehydratase from Mesorhizobium japonicum (strain LMG 29417 / CECT 9101 / MAFF 303099) (Mesorhizobium loti (strain MAFF 303099)).